A 394-amino-acid polypeptide reads, in one-letter code: MTERHLFTSESVSEGHPDKVADQVSDAILDAILEKDPMARVACETSVTTGLVLVFGEISTTAYVDIQKIVRQTVKDIGYTRAKYGFDGETVAVLVAIDEQSPDIAQGVDAALEVRDQDEKDDIGAGDQGLMFGFAVDETPELMPLPIALSHRLVRRLAELRKEKVLPYLRPDAKSQVTVEYDDQGQPQRVDTIVISTQHDDETTLEQIEKDIKEQVINEVIPHELLDDETKYFINPTGRFVIGGPQGDAGLTGRKIIVDTYGGYARHGGGAFSGKDATKVDRSASYAARYIAKNIVAAGLAKKVEVQLAYAIGVAQPVSISINTFGTSDLPESKLIEAVRKNFDLRPAGIIEMLDLRRPIYKQTAAYGHFGRTDIDLPWEQTDKVEALKASLAE.

Residue histidine 16 participates in ATP binding. Residue aspartate 18 participates in Mg(2+) binding. Residue glutamate 44 participates in K(+) binding. The L-methionine site is built by glutamate 57 and glutamine 100. The interval 100–110 (QSPDIAQGVDA) is flexible loop. ATP-binding positions include 172 to 174 (DAK), 239 to 240 (RF), aspartate 248, 254 to 255 (RK), alanine 271, and lysine 275. An L-methionine-binding site is contributed by aspartate 248. Lysine 279 provides a ligand contact to L-methionine.

This sequence belongs to the AdoMet synthase family. As to quaternary structure, homotetramer; dimer of dimers. Mg(2+) serves as cofactor. The cofactor is K(+).

The protein resides in the cytoplasm. The catalysed reaction is L-methionine + ATP + H2O = S-adenosyl-L-methionine + phosphate + diphosphate. It functions in the pathway amino-acid biosynthesis; S-adenosyl-L-methionine biosynthesis; S-adenosyl-L-methionine from L-methionine: step 1/1. Its function is as follows. Catalyzes the formation of S-adenosylmethionine (AdoMet) from methionine and ATP. The overall synthetic reaction is composed of two sequential steps, AdoMet formation and the subsequent tripolyphosphate hydrolysis which occurs prior to release of AdoMet from the enzyme. The protein is S-adenosylmethionine synthase of Enterococcus faecalis (strain ATCC 700802 / V583).